A 76-amino-acid polypeptide reads, in one-letter code: Conotoxin Cal5a L3 (76 aa).

The signal sequence occupies residues 1 to 22; that stretch reads MRFYIGLMAALMLTSVLRTDSA. A propeptide spanning residues 23 to 42 is cleaved from the precursor; the sequence is SVGQTGTKSELAVIERVIRQ. Pro-50 carries the 4-hydroxyproline modification. A 4-hydroxyproline; partial mark is found at Pro-58, Pro-62, and Pro-64.

It belongs to the conotoxin T superfamily. In terms of processing, contains 2 disulfide bonds that can be either 'C1-C3, C2-C4' or 'C1-C4, C2-C3', since these disulfide connectivities have been observed for conotoxins with cysteine framework V (for examples, see AC P0DQQ7 and AC P81755). In terms of tissue distribution, expressed by the venom duct.

Its subcellular location is the secreted. Probable neurotoxin with unknown target. Possibly targets ion channels. In Californiconus californicus (California cone), this protein is Conotoxin Cal5a L3.